The following is a 213-amino-acid chain: MYPGRNFPPRRQNRRENVNESIRVREVRAVFPDGTTEVMPTAAALRKAQELGLDLVLIAPTAVPPVAKAVDFGHYQYDLKKKQHDARKKQHVVQVKELKFRPNTDDHDYDFKKKHAIRFLQEGNRVKAVVQFRGREIAHADLGKKLLMRFAADLTAYGTVEGMPRLEGRNAHVLISPVKTLIKSEKPEKPEKPEKSEKTEKQGPSTPPAPSAS.

A disordered region spans residues 178 to 213; it reads VKTLIKSEKPEKPEKPEKSEKTEKQGPSTPPAPSAS. Positions 182–201 are enriched in basic and acidic residues; the sequence is IKSEKPEKPEKPEKSEKTEK.

The protein belongs to the IF-3 family. As to quaternary structure, monomer.

It localises to the cytoplasm. Functionally, IF-3 binds to the 30S ribosomal subunit and shifts the equilibrium between 70S ribosomes and their 50S and 30S subunits in favor of the free subunits, thus enhancing the availability of 30S subunits on which protein synthesis initiation begins. In Solibacter usitatus (strain Ellin6076), this protein is Translation initiation factor IF-3.